The sequence spans 386 residues: Prostatic acid phosphatase (386 aa).

A signal peptide spans 1–32 (MRAAPLLLARAASLSLGFLFLLFFWLDRSVLA). Arginine 43 is a substrate binding site. Histidine 44 serves as the catalytic Nucleophile. Residue arginine 47 coordinates substrate. Asparagine 94 is a glycosylation site (N-linked (GlcNAc...) asparagine). Arginine 111 lines the substrate pocket. 3 cysteine pairs are disulfide-bonded: cysteine 161–cysteine 372, cysteine 215–cysteine 313, and cysteine 347–cysteine 351. Asparagine 220 is a glycosylation site (N-linked (GlcNAc...) asparagine). Substrate is bound at residue histidine 289. Aspartate 290 serves as the catalytic Proton donor. Asparagine 333 carries N-linked (GlcNAc...) asparagine glycosylation.

It belongs to the histidine acid phosphatase family. Homodimer; dimer formation is required for phosphatase activity. Post-translationally, N-glycosylated. High mannose content, partially sialylated and fucosylated biantennary complex. Also fucosylated with partially sialylated triantennary complex oligosaccharides. Proteolytically cleaved in seminal fluid to produce several peptides. Peptide PAPf39, the most prominent, forms amyloid beta-sheet fibrils, SEVI (semen-derived enhancer of viral infection). In terms of tissue distribution, highly expressed in the prostate, restricted to glandular and ductal epithelial cells. Also expressed in bladder, kidney, pancreas, lung, cervix, testis and ovary. Weak expression in a subset of pancreatic islet cells, squamous epithelia, the pilosebaceous unit, colonic neuroendocrine cells and skin adnexal structures. Low expression in prostate carcinoma cells and tissues. Widely expressed. Expressed in the sarcolemma of skeletal muscle.

Its subcellular location is the secreted. It is found in the cell membrane. The protein resides in the lysosome membrane. It localises to the nucleus. The protein localises to the cytoplasm. Its subcellular location is the cytosol. It catalyses the reaction a phosphate monoester + H2O = an alcohol + phosphate. The catalysed reaction is 1-(9Z-octadecenoyl)-sn-glycero-3-phosphate + H2O = 1-(9Z-octadecenoyl)-sn-glycerol + phosphate. The enzyme catalyses a ribonucleoside 5'-phosphate + H2O = a ribonucleoside + phosphate. It carries out the reaction O-phospho-L-tyrosyl-[protein] + H2O = L-tyrosyl-[protein] + phosphate. Its activity is regulated as follows. Phosphatase activity inhibited by L(+)-tartrate, and by its derivative, alpha-benzylaminobenzylphosphonic acid. In terms of biological role, a non-specific tyrosine phosphatase that dephosphorylates a diverse number of substrates under acidic conditions (pH 4-6) including alkyl, aryl, and acyl orthophosphate monoesters and phosphorylated proteins. Has lipid phosphatase activity and inactivates lysophosphatidic acid in seminal plasma. Tyrosine phosphatase that acts as a tumor suppressor of prostate cancer through dephosphorylation of ERBB2 and deactivation of MAPK-mediated signaling. In addition to its tyrosine phosphatase activity has ecto-5'-nucleotidase activity in dorsal root ganglion (DRG) neurons. Generates adenosine from AMP which acts as a pain suppressor. Functionally, (Microbial infection) Forms amyloid beta-sheet fibrils in semen. These fibrils, termed SEVI (semen-derived enhancer of viral infection) capture HIV virions, attach them to target cells and enhance infection. SEVI amyloid fibrils are degraded by polyphenol epigallocatechin-3-gallate (EGCG), a constituent of green tea. Target cell attachment and enhancement of HIV infection is inhibited by surfen. Also similarly boosts XMRV (xenotropic murine leukemia virus-related virus) infection. The protein is Prostatic acid phosphatase of Homo sapiens (Human).